The sequence spans 85 residues: uncharacterized protein (85 aa).

This sequence belongs to the SF3B5 family.

This is an uncharacterized protein from Schizosaccharomyces pombe (strain 972 / ATCC 24843) (Fission yeast).